Here is a 1813-residue protein sequence, read N- to C-terminus: Latent-transforming growth factor beta-binding protein 2 (1813 aa).

The first 35 residues, 1–35, serve as a signal peptide directing secretion; it reads MRAPTTARCSGCIQRVRWRGFLPLVLAVLMGTSHA. The tract at residues 94–115 is heparin-binding; it reads NPGWLAEAEARRPPRTQQLRRV. Residues 103-152 are disordered; the sequence is ARRPPRTQQLRRVQPPVQTRRSHPRGQQQIAARAAPSVARLETPQRPAAA. Over residues 108 to 132 the composition is skewed to polar residues; sequence RTQQLRRVQPPVQTRRSHPRGQQQI. An N-linked (GlcNAc...) asparagine glycan is attached at Asn175. An EGF-like 1 domain is found at 181 to 213; the sequence is IKPVCQPPCQNRGSCSRPQVCICRSGFRGARCE. 3 disulfide bridges follow: Cys185–Cys195, Cys189–Cys201, and Cys203–Cys212. Residues 220–305 form a disordered region; it reads EFDPQNARPV…QLMSNALPSG (86 aa). Positions 226 to 243 are heparin-binding; it reads ARPVPRRSVERAPGPHRS. The segment covering 257 to 266 has biased composition (pro residues); the sequence is LVPPPSPPPS. Positions 293 to 302 are enriched in polar residues; that stretch reads ANGQLMSNAL. Asn328 carries an N-linked (GlcNAc...) asparagine glycan. 329 to 339 provides a ligand contact to heparin; that stretch reads LTEKIKKIKVV. The EGF-like 2 domain maps to 381–413; the sequence is RIYFCQIPCLNGGRCIGRDECWCPANSTGKFCH. 3 disulfide bridges follow: Cys385/Cys395, Cys389/Cys401, and Cys403/Cys412. An N-linked (GlcNAc...) asparagine glycan is attached at Asn406. A Phosphoserine modification is found at Ser491. The disordered stretch occupies residues 492–524; that stretch reads VETRASHRPHGNLGHSPWASNSIPARAGEAPRP. The TB 1 domain occupies 536 to 588; the sequence is GQCYLSTVNGQCANPLGSLTSQEDCCGSVGTFWGVTSCAPCPPRQEGPAFPVI. Disulfide bonds link Cys538-Cys560, Cys547-Cys573, and Cys561-Cys576. N-linked (GlcNAc...) asparagine glycosylation occurs at Asn603. One can recognise an EGF-like 3; calcium-binding domain in the interval 609-649; that stretch reads DINECLTLGLCKDSECVNTRGSYLCTCRPGLMLDPSRSRCV. 7 cysteine pairs are disulfide-bonded: Cys613–Cys624, Cys619–Cys633, Cys635–Cys648, Cys661–Cys683, Cys670–Cys696, Cys684–Cys699, and Cys685–Cys711. A TB 2 domain is found at 659-711; it reads GLCYRSLGSGTCTLPLVHRITKQICCCSRVGKAWGSTCEQCPLPGTEAFREIC. 2 disordered regions span residues 730–761 and 787–819; these read KAEEEELASPLREQTEQSTAPPPGQAERQPLR and SAPHLPARVPGDATGRPAPSLPGQGIPESPAEE. In terms of domain architecture, EGF-like 4 spans 835 to 877; it reads DFDPCFAGASNICGPGTCVSLPNGYRCVCSPGYQLHPSQDYCT. Cystine bridges form between Cys839–Cys852, Cys847–Cys861, Cys863–Cys876, Cys882–Cys893, Cys887–Cys902, Cys904–Cys919, Cys925–Cys936, Cys931–Cys945, Cys947–Cys959, Cys965–Cys976, Cys971–Cys985, Cys988–Cys999, Cys1005–Cys1016, Cys1011–Cys1025, Cys1027–Cys1040, Cys1046–Cys1057, Cys1052–Cys1066, Cys1069–Cys1082, Cys1088–Cys1099, Cys1094–Cys1108, Cys1111–Cys1124, Cys1130–Cys1142, Cys1137–Cys1151, Cys1153–Cys1165, Cys1171–Cys1183, Cys1177–Cys1192, Cys1194–Cys1207, Cys1213–Cys1224, Cys1219–Cys1233, Cys1235–Cys1249, Cys1255–Cys1268, Cys1263–Cys1277, Cys1281–Cys1293, Cys1299–Cys1311, Cys1305–Cys1320, Cys1322–Cys1335, Cys1341–Cys1353, Cys1348–Cys1362, Cys1364–Cys1378, Cys1405–Cys1428, Cys1415–Cys1440, Cys1429–Cys1443, Cys1430–Cys1455, Cys1481–Cys1494, Cys1489–Cys1503, Cys1505–Cys1518, Cys1524–Cys1534, Cys1529–Cys1543, and Cys1545–Cys1558. The region spanning 878 to 920 is the EGF-like 5; calcium-binding domain; the sequence is DDNECMRNPCEGRGRCVNSVGSYSCLCYPGYTLVTLGDTQECQ. The EGF-like 6; calcium-binding domain maps to 921 to 960; sequence DIDECEQPGVCSGGRCSNTEGSYHCECDRGYIMVRKGHCQ. An EGF-like 7; calcium-binding domain is found at 961–1000; it reads DINECRHPGTCPDGRCVNSPGSYTCLACEEGYVGQSGSCV. The EGF-like 8; calcium-binding domain maps to 1001–1041; that stretch reads DVNECLTPGICTHGRCINMEGSFRCSCEPGYEVTPDKKGCR. In terms of domain architecture, EGF-like 9; calcium-binding spans 1042-1083; sequence DVDECASRASCPTGLCLNTEGSFTCSACQSGYWVNEDGTACE. The region spanning 1084-1125 is the EGF-like 10; calcium-binding domain; that stretch reads DLDECAFPGVCPTGVCTNTVGSFSCKDCDQGYRPNPLGNRCE. Residues 1126–1166 enclose the EGF-like 11; calcium-binding domain; sequence DVDECEGPQSSCRGGECKNTEGSYQCLCHQGFQLVNGTMCE. Asn1161 carries an N-linked (GlcNAc...) asparagine glycan. The EGF-like 12; calcium-binding domain maps to 1167-1208; it reads DVNECVGEEHCAPHGECLNSLGSFFCLCAPGFASAEGGTRCQ. One can recognise an EGF-like 13; calcium-binding domain in the interval 1209-1250; the sequence is DVDECAATDPCPGGHCVNTEGSFSCLCETASFQPSPDSGECL. One can recognise an EGF-like 14; calcium-binding domain in the interval 1251–1294; sequence DIDECEDREDPVCGAWRCENSPGSYRCILDCQPGFYVAPNGDCI. Residues 1295–1336 enclose the EGF-like 15; calcium-binding domain; it reads DIDECANDTVCGNHGFCDNTDGSFRCLCDQGFETSPSGWECV. An N-linked (GlcNAc...) asparagine glycan is attached at Asn1301. Residues 1337–1379 form the EGF-like 16; calcium-binding domain; that stretch reads DVNECELMMAVCGDALCENVEGSFLCLCASDLEEYDAEEGHCR. The region spanning 1403–1455 is the TB 3 domain; the sequence is MECYSEHNGGPPCSQILGQNSTQAECCCTQGARWGKACAPCPSEDSVEFSQLC. Asn1422 carries N-linked (GlcNAc...) asparagine glycosylation. In terms of domain architecture, EGF-like 17; calcium-binding spans 1477-1519; that stretch reads DADECVLFGPALCQNGRCSNIVPGYICLCNPGYHYDASSRKCQ. Residues 1520-1559 enclose the EGF-like 18; calcium-binding domain; that stretch reads DHNECQDLACENGECVNQEGSFHCLCNPPLTLDLSGQRCV. A glycan (N-linked (GlcNAc...) asparagine) is linked at Asn1560. Positions 1576–1628 constitute a TB 4 domain; sequence DICWKKVTNDVCSQPLRGHHTTYTECCCQDGEAWSQQCALCPPRSSEVYAQLC. Cystine bridges form between Cys1578–Cys1601, Cys1587–Cys1613, Cys1602–Cys1616, and Cys1603–Cys1628. Positions 1631-1813 are C-terminal domain; it reads ARIEAERGAG…PGPPHCAAKE (183 aa). The segment at 1671-1717 is disordered; it reads YLGPEDTAPEPPFSNPASQPGDNTPVLEPPLQPSELQPHYLASHSEP. The region spanning 1725-1765 is the EGF-like 19; calcium-binding domain; it reads QAEECGILNGCENGRCVRVREGYTCDCFEGFQLDAPTLACV. Disulfide bonds link Cys1729/Cys1740, Cys1735/Cys1749, Cys1751/Cys1764, Cys1770/Cys1785, Cys1780/Cys1794, and Cys1796/Cys1809. Positions 1766-1810 constitute an EGF-like 20; calcium-binding domain; it reads DVNECEDLNGPARLCAHGHCENTEGSYRCHCSPGYVAEPGPPHCA.

It belongs to the LTBP family. Forms part of the large latent transforming growth factor beta precursor complex; removal is essential for activation of complex. Interacts with SDC4. Interacts (via C-terminal domain) with FBN1 (via N-terminal domain) in a Ca(+2)-dependent manner. N-Glycosylated. Post-translationally, contains hydroxylated asparagine residues. In terms of tissue distribution, expressed in the anterior chamber of the eye.

It is found in the secreted. It localises to the extracellular space. Its subcellular location is the extracellular matrix. May play an integral structural role in elastic-fiber architectural organization and/or assembly. This chain is Latent-transforming growth factor beta-binding protein 2 (Ltbp2), found in Mus musculus (Mouse).